The primary structure comprises 832 residues: Protein P (832 aa).

Positions 1 to 177 (MPLSYQHFRK…FCGSPYSWEQ (177 aa)) are terminal protein domain (TP). The segment at 178-335 (ELQHGAESFN…HCLSHLVNLL (158 aa)) is spacer. Polar residues-rich tracts occupy residues 205–220 (SKHQ…QQGQ) and 251–263 (SGHN…ESAS). The segment at 205 to 263 (SKHQQSRLGLQPQQGQLAKGQRGRSGSVRSRAHSATRRSVGVEPSGSGHNNNSASESAS) is disordered. Residues 336 to 679 (EDWGPCTEHG…YATLYPVARQ (344 aa)) form a polymerase/reverse transcriptase domain (RT) region. Residues 346–589 (KHHIRIPRTP…YSLNFMGYVI (244 aa)) form the Reverse transcriptase domain. Positions 418, 540, and 541 each coordinate Mg(2+).

The protein belongs to the hepadnaviridae P protein family.

It carries out the reaction DNA(n) + a 2'-deoxyribonucleoside 5'-triphosphate = DNA(n+1) + diphosphate. The catalysed reaction is Endonucleolytic cleavage to 5'-phosphomonoester.. Its activity is regulated as follows. Activated by host HSP70 and HSP40 in vitro to be able to bind the epsilon loop of the pgRNA. Because deletion of the RNase H region renders the protein partly chaperone-independent, the chaperones may be needed indirectly to relieve occlusion of the RNA-binding site by this domain. Inhibited by several reverse-transcriptase inhibitors: Lamivudine, Adefovir and Entecavir. Functionally, multifunctional enzyme that converts the viral RNA genome into dsDNA in viral cytoplasmic capsids. This enzyme displays a DNA polymerase activity that can copy either DNA or RNA templates, and a ribonuclease H (RNase H) activity that cleaves the RNA strand of RNA-DNA heteroduplexes in a partially processive 3'- to 5'-endonucleasic mode. Neo-synthesized pregenomic RNA (pgRNA) are encapsidated together with the P protein, and reverse-transcribed inside the nucleocapsid. Initiation of reverse-transcription occurs first by binding the epsilon loop on the pgRNA genome, and is initiated by protein priming, thereby the 5'-end of (-)DNA is covalently linked to P protein. Partial (+)DNA is synthesized from the (-)DNA template and generates the relaxed circular DNA (RC-DNA) genome. After budding and infection, the RC-DNA migrates in the nucleus, and is converted into a plasmid-like covalently closed circular DNA (cccDNA). The activity of P protein does not seem to be necessary for cccDNA generation, and is presumably released from (+)DNA by host nuclear DNA repair machinery. The chain is Protein P from Gorilla gorilla (western gorilla).